The following is a 382-amino-acid chain: S-adenosylmethionine decarboxylase proenzyme (382 aa).

Substrate is bound at residue Phe32. Active-site residues include Glu33 and Glu36. Substrate is bound at residue Leu87. The Schiff-base intermediate with substrate; via pyruvic acid role is filled by Ser90. Ser90 carries the post-translational modification Pyruvic acid (Ser); by autocatalysis. The active-site Proton donor; for catalytic activity is Cys104. Residue Phe248 participates in substrate binding. Catalysis depends on proton acceptor; for processing activity residues Ser254 and His267. Residue Glu271 participates in substrate binding.

It belongs to the eukaryotic AdoMetDC family. As to quaternary structure, heterotetramer of two alpha and two beta chains. Requires pyruvate as cofactor. Is synthesized initially as an inactive proenzyme. Formation of the active enzyme involves a self-maturation process in which the active site pyruvoyl group is generated from an internal serine residue via an autocatalytic post-translational modification. Two non-identical subunits are generated from the proenzyme in this reaction, and the pyruvate is formed at the N-terminus of the alpha chain, which is derived from the carboxyl end of the proenzyme. The post-translation cleavage follows an unusual pathway, termed non-hydrolytic serinolysis, in which the side chain hydroxyl group of the serine supplies its oxygen atom to form the C-terminus of the beta chain, while the remainder of the serine residue undergoes an oxidative deamination to produce ammonia and the pyruvoyl group blocking the N-terminus of the alpha chain.

It carries out the reaction S-adenosyl-L-methionine + H(+) = S-adenosyl 3-(methylsulfanyl)propylamine + CO2. It participates in amine and polyamine biosynthesis; S-adenosylmethioninamine biosynthesis; S-adenosylmethioninamine from S-adenosyl-L-methionine: step 1/1. The protein is S-adenosylmethionine decarboxylase proenzyme of Leishmania donovani.